Reading from the N-terminus, the 646-residue chain is Phosphomethylpyrimidine synthase (646 aa).

Substrate contacts are provided by residues Asn-235, Met-264, Tyr-293, His-329, 349-351 (SRG), 390-393 (DGLR), and Glu-429. His-433 contacts Zn(2+). Position 456 (Tyr-456) interacts with substrate. Residue His-497 coordinates Zn(2+). 3 residues coordinate [4Fe-4S] cluster: Cys-577, Cys-580, and Cys-585. Residues 624 to 646 (KSEEFRATGSELYHPAVHAEADE) form a disordered region.

Belongs to the ThiC family. Homodimer. [4Fe-4S] cluster is required as a cofactor.

It catalyses the reaction 5-amino-1-(5-phospho-beta-D-ribosyl)imidazole + S-adenosyl-L-methionine = 4-amino-2-methyl-5-(phosphooxymethyl)pyrimidine + CO + 5'-deoxyadenosine + formate + L-methionine + 3 H(+). It functions in the pathway cofactor biosynthesis; thiamine diphosphate biosynthesis. Functionally, catalyzes the synthesis of the hydroxymethylpyrimidine phosphate (HMP-P) moiety of thiamine from aminoimidazole ribotide (AIR) in a radical S-adenosyl-L-methionine (SAM)-dependent reaction. This Vibrio parahaemolyticus serotype O3:K6 (strain RIMD 2210633) protein is Phosphomethylpyrimidine synthase.